Consider the following 1002-residue polypeptide: Solute carrier family 12 member 3 (1002 aa).

The Cytoplasmic segment spans residues 1–135 (MAELPVTELP…KSPGEPVRFG (135 aa)). Serine 41 is subject to Phosphoserine. Phosphothreonine is present on threonine 44. At serine 47 the chain carries Phosphoserine. Phosphothreonine is present on residues threonine 48, threonine 53, and threonine 58. Phosphoserine occurs at positions 71 and 89. Threonine 122 carries the phosphothreonine modification. Phosphoserine is present on serine 124. Residues 136–165 (WVKGVMIRCMLNIWGVILYLRLPWITAQAG) form a discontinuously helical membrane-spanning segment. Na(+) is bound by residues leucine 146 and tryptophan 149. Residues 166–187 (IVLTWLIILLSVMVTSITGLSI) form a helical membrane-spanning segment. The Cytoplasmic portion of the chain corresponds to 188–218 (SAISTNGKVKSGGTYFLISRSLGPELGGSIG). A helical membrane pass occupies residues 219–241 (LIFAFANAVGVAMHTVGFAETVR). The Extracellular segment spans residues 242 to 253 (DLLQEYGTPIVD). 2 helical membrane passes run 254–278 (PIND…AGME) and 279–301 (WESK…YLVG). Topologically, residues 302–336 (TLIPASEDKASKGFYSYHGDIFVQNLVPDWRGIDG) are extracellular. Residues 337–358 (SFFGMFSIFFPSATGILAGANI) traverse the membrane as a discontinuously helical segment. The chloride site is built by glycine 351, isoleucine 352, and leucine 353. Residues 359–369 (SGDLKDPAVAI) lie on the Cytoplasmic side of the membrane. A helical transmembrane segment spans residues 370-391 (PKGTLMAIFWTTISYLAISATI). Residues 392-451 (GSCVVRDASGDVNDTMTPGPGPCEGLACGYGWNFTECSQQRSCRYGLINYYQTMSMVSAF) lie on the Extracellular side of the membrane. Asparagine 404 is a glycosylation site (N-linked (GlcNAc...) asparagine). Cysteines 414 and 419 form a disulfide. The N-linked (GlcNAc...) asparagine glycan is linked to asparagine 424. Cysteine 428 and cysteine 434 are joined by a disulfide. Residues 452–475 (APLITAGIFGATLSSALACLVSAA) form a helical membrane-spanning segment. Na(+) contacts are provided by alanine 462, serine 465, and serine 466. Over 476–505 (KVFQCLCEDQLYPLIGFFGKGYGKNREPVR) the chain is Cytoplasmic. A helical membrane pass occupies residues 506-520 (GYLLAYAIAVAFIII). Over 521 to 525 (AELNT) the chain is Extracellular. The helical transmembrane segment at 526-542 (IAPIISNFFLCSYALIN) threads the bilayer. Tyrosine 538 lines the chloride pocket. The Cytoplasmic portion of the chain corresponds to 543–565 (FSCFHASITNSPGWRPSFRYYSK). 2 helical membrane-spanning segments follow: residues 566-585 (WAAL…LTWW) and 586-597 (AALIAIGVVLFL). The Cytoplasmic segment spans residues 598–1002 (LLYVIYKKPE…QENVLTFYCQ (405 aa)). The tract at residues 613–628 (SVQAGSYNLALSYSVG) is scissor helix. Residues leucine 646, arginine 653, valine 675, glycine 739, leucine 778, and asparagine 779 each coordinate ATP.

The protein belongs to the SLC12A transporter family. Homodimer; adopts a domain-swap conformation at the scissor helices connecting the transmembrane domain and C-terminal domain. Interacts with KLHL3. Interacts with IL18R1; this interaction is increased by IL18 treatment. Post-translationally, ubiquitinated; ubiquitination is essential for regulation of endocytosis. Phosphorylated at Thr-53, Thr-58 and Ser-71 by OXSR1/OSR1 and STK39/SPAK downstream of WNK4, promoting its activity. Phosphorylated in response to IL18. Expressed predominantly in kidney, including in distal tubules (at protein level). Detected at low levels in heart, lung and liver. Not detected in normal aorta, but abundantly expressed in fatty streaks and advanced atherosclerotic lesions. In atherosclerotic lesions, expressed in macrophages, smooth muscle cells and endothelial cells (at protein level).

Its subcellular location is the cell membrane. It is found in the apical cell membrane. It carries out the reaction chloride(out) + Na(+)(out) = chloride(in) + Na(+)(in). Phosphorylation by OXSR1/OSR1 and STK39/SPAK in kidney distal convoluted tubules promotes its activity. Also activated by OXSR1/OSR1 and STK39/SPAK downstream of WNK3. Inhibited by thiazide-type diuretic metolazone. Thiazide drugs, such as polythiazide, specifically inhibit SLC12A3/NCC transporter activity by competing with chloride for binding. Electroneutral sodium and chloride ion cotransporter, which acts as a key mediator of sodium and chloride reabsorption in kidney distal convoluted tubules. Also acts as a receptor for the pro-inflammatory cytokine IL18, thereby contributing to IL18-induced cytokine production, including IFNG, IL6, IL18 and CCL2. May act either independently of IL18R1, or in a complex with IL18R1. The sequence is that of Solute carrier family 12 member 3 from Mus musculus (Mouse).